The following is a 727-amino-acid chain: Putative E3 ubiquitin-protein ligase UNKL (727 aa).

Residues 1–21 (MPSVSKAAAAALSGSPPQTEK) form a disordered region. 4 consecutive C3H1-type zinc fingers follow at residues 75–104 (YSPD…HRTT), 115–145 (YYKT…HGPL), 243–277 (QYRS…HSRT), and 285–313 (IYKS…HTEK). Positions 330-339 (STSAYSSQPG) are enriched in polar residues. Disordered stretches follow at residues 330-360 (STSA…DSKQ), 446-514 (LTGP…ATLG), and 543-562 (SPSP…SPNS). Residues 463–495 (SLPRSPSLHSSSSLSTSPLSSLSQSLSGPLVSS) are compositionally biased toward low complexity. The segment at 686-721 (CVACQERAHGTVLRPCQHRVLCEPCAASTPECPYCK) adopts an RING-type zinc-finger fold.

This sequence belongs to the unkempt family. As to quaternary structure, interacts with the GTP-bound form of Rac1. Interacts with Baf60b/Smarcd2. Post-translationally, ubiquitination is enhanced by activated Rac1. The presence of the RING finger domain is not essential for ubiquitination to occur. As to expression, ubiquitous.

The protein localises to the cytoplasm. It localises to the nucleus. Its pathway is protein modification; protein ubiquitination. May participate in a protein complex showing an E3 ligase activity regulated by Rac1. Ubiquitination is directed towards itself and possibly other substrates, such as Baf60b/Smarcd2. Intrinsic E3 ligase activity has not been proven. The sequence is that of Putative E3 ubiquitin-protein ligase UNKL (Unkl) from Mus musculus (Mouse).